A 233-amino-acid chain; its full sequence is Orotidine 5'-phosphate decarboxylase (233 aa).

Substrate is bound by residues D9, K31, 58–67 (DLKLHDIPNT), T120, R182, Q191, G211, and R212. Catalysis depends on K60, which acts as the Proton donor.

It belongs to the OMP decarboxylase family. Type 1 subfamily. Homodimer.

The enzyme catalyses orotidine 5'-phosphate + H(+) = UMP + CO2. It functions in the pathway pyrimidine metabolism; UMP biosynthesis via de novo pathway; UMP from orotate: step 2/2. Catalyzes the decarboxylation of orotidine 5'-monophosphate (OMP) to uridine 5'-monophosphate (UMP). The polypeptide is Orotidine 5'-phosphate decarboxylase (Listeria innocua serovar 6a (strain ATCC BAA-680 / CLIP 11262)).